The primary structure comprises 782 residues: MAPHRPAPALLCALSLALCALSLPVRAATASRGASQAGAPQGRVPEARPNSMVVEHPEFLKAGKEPGLQIWRVEKFDLVPVPTNLYGDFFTGDAYVILKTVQLRNGNLQYDLHYWLGNECSQDESGAAAIFTVQLDDYLNGRAVQHREVQGFESATFLGYFKSGLKYKKGGVASGFKHVVPNEVVVQRLFQVKGRRVVRATEVPVSWESFNNGDCFILDLGNNIHQWCGSNSNRYERLKATQVSKGIRDNERSGRARVHVSEEGTEPEAMLQVLGPKPALPAGTEDTAKEDAANRKLAKLYKVSNGAGTMSVSLVADENPFAQGALKSEDCFILDHGKDGKIFVWKGKQANTEERKAALKTASDFITKMDYPKQTQVSVLPEGGETPLFKQFFKNWRDPDQTDGLGLSYLSSHIANVERVPFDAATLHTSTAMAAQHGMDDDGTGQKQIWRIEGSNKVPVDPATYGQFYGGDSYIILYNYRHGGRQGQIIYNWQGAQSTQDEVAASAILTAQLDEELGGTPVQSRVVQGKEPAHLMSLFGGKPMIIYKGGTSREGGQTAPASTRLFQVRANSAGATRAVEVLPKAGALNSNDAFVLKTPSAAYLWVGTGASEAEKTGAQELLRVLRAQPVQVAEGSEPDGFWEALGGKAAYRTSPRLKDKKMDAHPPRLFACSNKIGRFVIEEVPGELMQEDLATDDVMLLDTWDQVFVWVGKDSQEEEKTEALTSAKRYIETDPANRDRRTPITVVKQGFEPPSFVGWFLGWDDDYWSVDPLDRAMAELAA.

An N-terminal signal peptide occupies residues 1–27 (MAPHRPAPALLCALSLALCALSLPVRA). The segment at 53–176 (VVEHPEFLKA…YKKGGVASGF (124 aa)) is actin-severing. The stretch at 76–158 (FDLVPVPTNL…VQGFESATFL (83 aa)) is one Gelsolin-like 1 repeat. Tyrosine 86 carries the post-translational modification Phosphotyrosine; by SRC; in vitro. Ca(2+)-binding residues include glycine 92, aspartate 93, glutamate 124, aspartate 136, glycine 141, and alanine 143. Residues 123–126 (DESG) are actin-actin interfilament contact point. 162-169 (KSGLKYKK) is an a 1,2-diacyl-sn-glycero-3-phospho-(1D-myo-inositol-4,5-bisphosphate) binding site. Valine 172 serves as a coordination point for Ca(2+). Residue 188-196 (RLFQVKGRR) coordinates a 1,2-diacyl-sn-glycero-3-phospho-(1D-myo-inositol-4,5-bisphosphate). The stretch at 198–270 (VRATEVPVSW…SEEGTEPEAM (73 aa)) is one Gelsolin-like 2 repeat. Ca(2+)-binding residues include glycine 213 and aspartate 214. A disulfide bond links cysteine 215 and cysteine 228. Glutamate 236 contacts Ca(2+). Residues 247–262 (IRDNERSGRARVHVSE) show a composition bias toward basic and acidic residues. The interval 247 to 285 (IRDNERSGRARVHVSEEGTEPEAMLQVLGPKPALPAGTE) is disordered. Residues aspartate 286, glutamate 329, aspartate 330, and glutamate 354 each contribute to the Ca(2+) site. A Gelsolin-like 3 repeat occupies 317 to 389 (DENPFAQGAL…LPEGGETPLF (73 aa)). Phosphotyrosine; by SRC; in vitro is present on tyrosine 409. The actin-binding, Ca-sensitive stretch occupies residues 434–782 (AAQHGMDDDG…LDRAMAELAA (349 aa)). A Gelsolin-like 4 repeat occupies 455–536 (SNKVPVDPAT…VQGKEPAHLM (82 aa)). The residue at position 465 (tyrosine 465) is a Phosphotyrosine; by SRC. Positions 471, 472, 502, 514, 519, 521, and 551 each coordinate Ca(2+). The Gelsolin-like 5 repeat unit spans residues 576–642 (TRAVEVLPKA…AEGSEPDGFW (67 aa)). Lysine 584 carries the N6-acetyllysine modification. Residues asparagine 591 and aspartate 592 each contribute to the Ca(2+) site. The residue at position 603 (tyrosine 603) is a Phosphotyrosine; by SRC; in vitro. Ca(2+) is bound at residue glutamate 614. Tyrosine 651 bears the Phosphotyrosine; by SRC; in vitro mark. One copy of the Gelsolin-like 6 repeat lies at 681-756 (IEEVPGELMQ…VKQGFEPPSF (76 aa)). Ca(2+) is bound by residues aspartate 696, aspartate 697, and glutamate 719. Threonine 742 carries the phosphothreonine modification.

It belongs to the villin/gelsolin family. As to quaternary structure, binds to actin and to fibronectin. Identified in a complex composed of ACTA1, COBL, GSN and TMSB4X. Interacts with the inactive form of EIF2AK2/PKR. Interacts with FLII. Post-translationally, phosphorylation on Tyr-86, Tyr-409, Tyr-465, Tyr-603 and Tyr-651 in vitro is induced in presence of phospholipids. In terms of tissue distribution, phagocytic cells, platelets, fibroblasts, nonmuscle cells, smooth and skeletal muscle cells.

The protein resides in the cytoplasm. The protein localises to the cytoskeleton. Its subcellular location is the secreted. Its function is as follows. Calcium-regulated, actin-modulating protein that binds to the plus (or barbed) ends of actin monomers or filaments, preventing monomer exchange (end-blocking or capping). It can promote the assembly of monomers into filaments (nucleation) as well as sever filaments already formed. Plays a role in ciliogenesis. The chain is Gelsolin (GSN) from Homo sapiens (Human).